The primary structure comprises 231 residues: Coproheme decarboxylase (231 aa).

Residue Lys44 forms an Isoglutamyl lysine isopeptide (Lys-Gln) (interchain with Q-Cter in protein Pup) linkage. Residue Tyr133 is part of the active site. Residue His156 coordinates Fe-coproporphyrin III.

The protein belongs to the ChdC family. Type 2 subfamily. Requires Fe-coproporphyrin III as cofactor.

The catalysed reaction is Fe-coproporphyrin III + 2 H2O2 + 2 H(+) = heme b + 2 CO2 + 4 H2O. It catalyses the reaction Fe-coproporphyrin III + H2O2 + H(+) = harderoheme III + CO2 + 2 H2O. The enzyme catalyses harderoheme III + H2O2 + H(+) = heme b + CO2 + 2 H2O. The protein operates within porphyrin-containing compound metabolism; protoheme biosynthesis. Its function is as follows. Involved in coproporphyrin-dependent heme b biosynthesis. Catalyzes the decarboxylation of Fe-coproporphyrin III (coproheme) to heme b (protoheme IX), the last step of the pathway. The reaction occurs in a stepwise manner with a three-propionate intermediate. The protein is Coproheme decarboxylase of Mycolicibacterium smegmatis (strain ATCC 700084 / mc(2)155) (Mycobacterium smegmatis).